We begin with the raw amino-acid sequence, 253 residues long: 5-oxoprolinase subunit A (253 aa).

It belongs to the LamB/PxpA family. In terms of assembly, forms a complex composed of PxpA, PxpB and PxpC.

The catalysed reaction is 5-oxo-L-proline + ATP + 2 H2O = L-glutamate + ADP + phosphate + H(+). Functionally, catalyzes the cleavage of 5-oxoproline to form L-glutamate coupled to the hydrolysis of ATP to ADP and inorganic phosphate. The chain is 5-oxoprolinase subunit A from Bacillus cereus (strain AH820).